The sequence spans 325 residues: Biotin synthase (325 aa).

In terms of domain architecture, Radical SAM core spans 43 to 262 (CSVETAQLLS…VAVARLLMPR (220 aa)). Positions 58, 62, and 65 each coordinate [4Fe-4S] cluster. [2Fe-2S] cluster is bound by residues Cys102, Cys133, Cys193, and Arg266.

The protein belongs to the radical SAM superfamily. Biotin synthase family. In terms of assembly, homodimer. It depends on [4Fe-4S] cluster as a cofactor. Requires [2Fe-2S] cluster as cofactor.

The enzyme catalyses (4R,5S)-dethiobiotin + (sulfur carrier)-SH + 2 reduced [2Fe-2S]-[ferredoxin] + 2 S-adenosyl-L-methionine = (sulfur carrier)-H + biotin + 2 5'-deoxyadenosine + 2 L-methionine + 2 oxidized [2Fe-2S]-[ferredoxin]. It participates in cofactor biosynthesis; biotin biosynthesis; biotin from 7,8-diaminononanoate: step 2/2. Functionally, catalyzes the conversion of dethiobiotin (DTB) to biotin by the insertion of a sulfur atom into dethiobiotin via a radical-based mechanism. This chain is Biotin synthase, found in Azorhizobium caulinodans (strain ATCC 43989 / DSM 5975 / JCM 20966 / LMG 6465 / NBRC 14845 / NCIMB 13405 / ORS 571).